Reading from the N-terminus, the 856-residue chain is DNA gyrase subunit A (856 aa).

A Topo IIA-type catalytic domain is found at 45-517 (LPDARDGLKP…DDGTVTHEDL (473 aa)). The active-site O-(5'-phospho-DNA)-tyrosine intermediate is Tyr133. The GyrA-box signature appears at 544-550 (QHRGGKG). The segment at 822-856 (TVASVDTHPRTDDSSEADSGDGESESENATATTPS) is disordered. Over residues 835–847 (SSEADSGDGESES) the composition is skewed to acidic residues.

Belongs to the type II topoisomerase GyrA/ParC subunit family. In terms of assembly, heterotetramer, composed of two GyrA and two GyrB chains. In the heterotetramer, GyrA contains the active site tyrosine that forms a transient covalent intermediate with DNA, while GyrB binds cofactors and catalyzes ATP hydrolysis.

It localises to the cytoplasm. It catalyses the reaction ATP-dependent breakage, passage and rejoining of double-stranded DNA.. A type II topoisomerase that negatively supercoils closed circular double-stranded (ds) DNA in an ATP-dependent manner to modulate DNA topology and maintain chromosomes in an underwound state. Negative supercoiling favors strand separation, and DNA replication, transcription, recombination and repair, all of which involve strand separation. Also able to catalyze the interconversion of other topological isomers of dsDNA rings, including catenanes and knotted rings. Type II topoisomerases break and join 2 DNA strands simultaneously in an ATP-dependent manner. The polypeptide is DNA gyrase subunit A (Haloquadratum walsbyi (strain DSM 16790 / HBSQ001)).